A 390-amino-acid polypeptide reads, in one-letter code: Precorrin-6Y C(5,15)-methyltransferase [decarboxylating] (390 aa).

This sequence belongs to the precorrin methyltransferase family.

The catalysed reaction is precorrin-6B + 2 S-adenosyl-L-methionine = precorrin-8X + 2 S-adenosyl-L-homocysteine + CO2 + 3 H(+). It participates in cofactor biosynthesis; adenosylcobalamin biosynthesis; cob(II)yrinate a,c-diamide from precorrin-2 (aerobic route): step 7/10. Catalyzes the methylation of both C-5 and C-15 in precorrin-6Y to form precorrin-8X. This chain is Precorrin-6Y C(5,15)-methyltransferase [decarboxylating] (cobL), found in Mycobacterium tuberculosis (strain CDC 1551 / Oshkosh).